The primary structure comprises 567 residues: Geranylgeranyl transferase type-2 subunit alpha (567 aa).

6 PFTA repeats span residues leucine 44–valine 78, leucine 88–glutamate 122, asparagine 124–valine 158, proline 159–proline 193, valine 207–proline 241, and valine 363–proline 397. The residue at position 98 (serine 98) is a Phosphoserine. LRR repeat units follow at residues glutamate 442–leucine 463, leucine 464–arginine 486, cysteine 487–proline 508, arginine 509–threonine 530, and arginine 534–leucine 555.

Belongs to the protein prenyltransferase subunit alpha family. Heterotrimer composed of RABGGTA, RABGGTB and CHM; within this trimer, RABGGTA and RABGGTB form the catalytic component B, while CHM (component A) mediates peptide substrate binding. The Rab GGTase dimer (RGGT) interacts with CHM (component A) prior to Rab protein binding; the association is stabilized by geranylgeranyl pyrophosphate (GGpp). The CHM:RGGT:Rab complex is destabilized by GGpp. Interacts with non-phosphorylated form of RAB8A; phosphorylation of RAB8A at 'Thr-72' disrupts this interaction.

The catalysed reaction is geranylgeranyl diphosphate + L-cysteinyl-[protein] = S-geranylgeranyl-L-cysteinyl-[protein] + diphosphate. The enzymatic reaction requires the aid of a Rab escort protein (also called component A), such as CHM. In terms of biological role, catalyzes the transfer of a geranylgeranyl moiety from geranylgeranyl diphosphate to both cysteines of Rab proteins with the C-terminal sequence -XXCC, -XCXC and -CCXX, such as RAB1A, RAB3A, RAB5A and RAB7A. This Bos taurus (Bovine) protein is Geranylgeranyl transferase type-2 subunit alpha (RABGGTA).